The chain runs to 445 residues: Phosphoglucosamine mutase (445 aa).

Catalysis depends on Ser102, which acts as the Phosphoserine intermediate. 4 residues coordinate Mg(2+): Ser102, Asp241, Asp243, and Asp245. Residue Ser102 is modified to Phosphoserine.

Belongs to the phosphohexose mutase family. It depends on Mg(2+) as a cofactor. Activated by phosphorylation.

The catalysed reaction is alpha-D-glucosamine 1-phosphate = D-glucosamine 6-phosphate. Its function is as follows. Catalyzes the conversion of glucosamine-6-phosphate to glucosamine-1-phosphate. In Acinetobacter baumannii (strain AB0057), this protein is Phosphoglucosamine mutase.